The following is an 884-amino-acid chain: Chondroitin sulfate synthase 3 (884 aa).

Topologically, residues 1–7 are cytoplasmic; sequence MAVRSRR. The chain crosses the membrane as a helical; Signal-anchor for type II membrane protein span at residues 8–28; the sequence is PWVSVALGLVLGFTAASWLIA. At 29–884 the chain is on the lumenal side; that stretch reads PRVAELSEKR…LGVRDNRTLS (856 aa). The tract at residues 47–164 is disordered; that stretch reads YYGRSATGPR…NGSGDGGAAV (118 aa). Composition is skewed to low complexity over residues 60 to 69 and 84 to 96; these read QQLLPQPQSR and PGPQ…PGGP. N-linked (GlcNAc...) asparagine glycosylation is found at asparagine 155 and asparagine 281. The tract at residues 437–456 is disordered; that stretch reads SNSEVSKEDQQLGRTPSFNH. A glycan (N-linked (GlcNAc...) asparagine) is linked at asparagine 712. Residues aspartate 722 and histidine 836 each coordinate a divalent metal cation. Asparagine 880 carries an N-linked (GlcNAc...) asparagine glycan.

Belongs to the chondroitin N-acetylgalactosaminyltransferase family. Co(2+) is required as a cofactor. Requires Mn(2+) as cofactor. Cd(2+) serves as cofactor.

It localises to the golgi apparatus. The protein localises to the golgi stack membrane. The enzyme catalyses 3-O-(beta-D-GlcA-(1-&gt;3)-beta-D-GalNAc-(1-&gt;4)-beta-D-GlcA-(1-&gt;3)-beta-D-Gal-(1-&gt;3)-beta-D-Gal-(1-&gt;4)-beta-D-Xyl)-L-seryl-[protein] + UDP-N-acetyl-alpha-D-galactosamine = 3-O-(beta-D-GalNAc-(1-&gt;4)-beta-D-GlcA-(1-&gt;3)-beta-D-GalNAc-(1-&gt;4)-beta-D-GlcA-(1-&gt;3)-beta-D-Gal-(1-&gt;3)-beta-D-Gal-(1-&gt;4)-beta-D-Xyl)-L-seryl-[protein] + UDP + H(+). It carries out the reaction 3-O-{beta-D-GlcA-(1-&gt;3)-[beta-D-GalNAc-(1-&gt;4)-beta-D-GlcA-(1-&gt;3)](n)-beta-D-GalNAc-(1-&gt;4)-beta-D-GlcA-(1-&gt;3)-beta-D-Gal-(1-&gt;3)-beta-D-Gal-(1-&gt;4)-beta-D-Xyl}-L-seryl-[protein] + UDP-N-acetyl-alpha-D-galactosamine = 3-O-{[beta-D-GalNAc-(1-&gt;4)-beta-D-GlcA-(1-&gt;3)](n+1)-beta-D-GalNAc-(1-&gt;4)-beta-D-GlcA-(1-&gt;3)-beta-D-Gal-(1-&gt;3)-beta-D-Gal-(1-&gt;4)-beta-D-Xyl}-L-seryl-[protein] + UDP + H(+). The catalysed reaction is 3-O-(beta-D-GalNAc-(1-&gt;4)-beta-D-GlcA-(1-&gt;3)-beta-D-Gal-(1-&gt;3)-beta-D-Gal-(1-&gt;4)-beta-D-Xyl)-L-seryl-[protein] + UDP-alpha-D-glucuronate = 3-O-(beta-D-GlcA-(1-&gt;3)-beta-D-GalNAc-(1-&gt;4)-beta-D-GlcA-(1-&gt;3)-beta-D-Gal-(1-&gt;3)-beta-D-Gal-(1-&gt;4)-beta-D-Xyl)-L-seryl-[protein] + UDP + H(+). It catalyses the reaction 3-O-{[beta-D-GalNAc-(1-&gt;4)-beta-D-GlcA-(1-&gt;3)](n)-beta-D-GalNAc-(1-&gt;4)-beta-D-GlcA-(1-&gt;3)-beta-D-Gal-(1-&gt;3)-beta-D-Gal-(1-&gt;4)-beta-D-Xyl}-L-seryl-[protein] + UDP-alpha-D-glucuronate = 3-O-{beta-D-GlcA-(1-&gt;3)-[beta-D-GalNAc-(1-&gt;4)-beta-D-GlcA-(1-&gt;3)](n)-beta-D-GalNAc-(1-&gt;4)-beta-D-GlcA-(1-&gt;3)-beta-D-Gal-(1-&gt;3)-beta-D-Gal-(1-&gt;4)-beta-D-Xyl}-L-seryl-[protein] + UDP + H(+). Functionally, has both beta-1,3-glucuronic acid and beta-1,4-N-acetylgalactosamine transferase activity. Transfers glucuronic acid (GlcUA) from UDP-GlcUA and N-acetylgalactosamine (GalNAc) from UDP-GalNAc to the non-reducing end of the elongating chondroitin polymer. Specific activity is much reduced compared to CHSY1. The sequence is that of Chondroitin sulfate synthase 3 (Chsy3) from Mus musculus (Mouse).